Here is a 233-residue protein sequence, read N- to C-terminus: Uracil-DNA glycosylase (233 aa).

D70 serves as the catalytic Proton acceptor.

Belongs to the uracil-DNA glycosylase (UDG) superfamily. UNG family.

The protein localises to the cytoplasm. The enzyme catalyses Hydrolyzes single-stranded DNA or mismatched double-stranded DNA and polynucleotides, releasing free uracil.. Functionally, excises uracil residues from the DNA which can arise as a result of misincorporation of dUMP residues by DNA polymerase or due to deamination of cytosine. This chain is Uracil-DNA glycosylase, found in Helicobacter pylori (strain HPAG1).